A 121-amino-acid polypeptide reads, in one-letter code: Keratin-associated protein 1-4 (121 aa).

The protein belongs to the KRTAP type 1 family. As to quaternary structure, interacts with hair keratins. Expressed in the middle/upper portions of the hair cortex, in the region termed the keratogenous zone.

Its function is as follows. In the hair cortex, hair keratin intermediate filaments are embedded in an interfilamentous matrix, consisting of hair keratin-associated proteins (KRTAP), which are essential for the formation of a rigid and resistant hair shaft through their extensive disulfide bond cross-linking with abundant cysteine residues of hair keratins. The matrix proteins include the high-sulfur and high-glycine-tyrosine keratins. The chain is Keratin-associated protein 1-4 (KRTAP1-4) from Homo sapiens (Human).